A 338-amino-acid chain; its full sequence is tRNA (cytidine(56)-2'-O)-methyltransferase (338 aa).

Residues leucine 79 and 105-109 (GSEKV) each bind S-adenosyl-L-methionine. The HD domain occupies 188–295 (LINHVKSVKE…VAHADNLFAG (108 aa)).

This sequence belongs to the aTrm56 family. As to quaternary structure, homodimer.

Its subcellular location is the cytoplasm. It catalyses the reaction cytidine(56) in tRNA + S-adenosyl-L-methionine = 2'-O-methylcytidine(56) in tRNA + S-adenosyl-L-homocysteine + H(+). In terms of biological role, specifically catalyzes the AdoMet-dependent 2'-O-ribose methylation of cytidine at position 56 in tRNAs. This Thermoplasma volcanium (strain ATCC 51530 / DSM 4299 / JCM 9571 / NBRC 15438 / GSS1) protein is tRNA (cytidine(56)-2'-O)-methyltransferase.